Consider the following 336-residue polypeptide: MAMSDRLLKAWYEGHPALALLRPLESLYRRVVQRKRTRFLAGEGEIYQSPVPVVVVGNITVGGTGKTPLILWLIEHCRRSGLRVGVVSRGYGAKPPQLPWRVEASHSADLAGDEPLLIVQRCGVPLMIDPDRSRAVKALLASETLDLILSDDGLQHYRLARDLELVLIDAARGLGNRRCLPAGPLREPVERLQSVDALLYNGAASDREDGFAFRLQPAALVNLQTGERQPVDHFAPGQQVHAVAGIGNPQRFFNTLETLHWQPISHAFADHAPYSAEVLNFTPSLPLVMTEKDAVKCRAFAQPDWWYLAVDALPSPAFVAWFDTQLMRLLPARLLP.

60-67 is an ATP binding site; the sequence is TVGGTGKT.

Belongs to the LpxK family.

It catalyses the reaction a lipid A disaccharide + ATP = a lipid IVA + ADP + H(+). It participates in glycolipid biosynthesis; lipid IV(A) biosynthesis; lipid IV(A) from (3R)-3-hydroxytetradecanoyl-[acyl-carrier-protein] and UDP-N-acetyl-alpha-D-glucosamine: step 6/6. Transfers the gamma-phosphate of ATP to the 4'-position of a tetraacyldisaccharide 1-phosphate intermediate (termed DS-1-P) to form tetraacyldisaccharide 1,4'-bis-phosphate (lipid IVA). In Pseudomonas fluorescens (strain SBW25), this protein is Tetraacyldisaccharide 4'-kinase.